The primary structure comprises 309 residues: Aspartate carbamoyltransferase catalytic subunit (309 aa).

Carbamoyl phosphate contacts are provided by Arg-55 and Thr-56. Lys-85 contacts L-aspartate. Residues Arg-106, His-135, and Gln-138 each contribute to the carbamoyl phosphate site. Residues Arg-168 and Arg-230 each coordinate L-aspartate. Residues Leu-268 and Pro-269 each contribute to the carbamoyl phosphate site.

The protein belongs to the aspartate/ornithine carbamoyltransferase superfamily. ATCase family. Heterododecamer (2C3:3R2) of six catalytic PyrB chains organized as two trimers (C3), and six regulatory PyrI chains organized as three dimers (R2).

It carries out the reaction carbamoyl phosphate + L-aspartate = N-carbamoyl-L-aspartate + phosphate + H(+). Its pathway is pyrimidine metabolism; UMP biosynthesis via de novo pathway; (S)-dihydroorotate from bicarbonate: step 2/3. In terms of biological role, catalyzes the condensation of carbamoyl phosphate and aspartate to form carbamoyl aspartate and inorganic phosphate, the committed step in the de novo pyrimidine nucleotide biosynthesis pathway. This Vibrio campbellii (strain ATCC BAA-1116) protein is Aspartate carbamoyltransferase catalytic subunit.